Reading from the N-terminus, the 246-residue chain is tRNA pseudouridine synthase A (246 aa).

Aspartate 52 serves as the catalytic Nucleophile. Tyrosine 110 contributes to the substrate binding site.

Belongs to the tRNA pseudouridine synthase TruA family. Homodimer.

The catalysed reaction is uridine(38/39/40) in tRNA = pseudouridine(38/39/40) in tRNA. Functionally, formation of pseudouridine at positions 38, 39 and 40 in the anticodon stem and loop of transfer RNAs. The polypeptide is tRNA pseudouridine synthase A (Exiguobacterium sp. (strain ATCC BAA-1283 / AT1b)).